The sequence spans 68 residues: Large ribosomal subunit protein bL31 (68 aa).

Positions 16, 18, 37, and 40 each coordinate Zn(2+).

Belongs to the bacterial ribosomal protein bL31 family. Type A subfamily. In terms of assembly, part of the 50S ribosomal subunit. Zn(2+) serves as cofactor.

Its function is as follows. Binds the 23S rRNA. In Aquifex aeolicus (strain VF5), this protein is Large ribosomal subunit protein bL31.